Consider the following 214-residue polypeptide: Small ribosomal subunit protein uS3c (214 aa).

Positions 39–111 constitute a KH type-2 domain; it reads IRTYLNKLAK…QLTINIIEVE (73 aa).

This sequence belongs to the universal ribosomal protein uS3 family. As to quaternary structure, part of the 30S ribosomal subunit.

The protein localises to the plastid. The protein resides in the chloroplast. This is Small ribosomal subunit protein uS3c (rps3) from Trieres chinensis (Marine centric diatom).